The sequence spans 462 residues: Nitrogenase iron-iron protein beta chain (462 aa).

Positions 20, 45, 104, and 143 each coordinate [8Fe-7S] cluster.

It belongs to the NifD/NifK/NifE/NifN family. Hexamer of two alpha, two beta, and two delta chains. It depends on [8Fe-7S] cluster as a cofactor.

The enzyme catalyses N2 + 8 reduced [2Fe-2S]-[ferredoxin] + 16 ATP + 16 H2O = H2 + 8 oxidized [2Fe-2S]-[ferredoxin] + 2 NH4(+) + 16 ADP + 16 phosphate + 6 H(+). This iron-iron protein is part of the nitrogenase complex that catalyzes the key enzymatic reactions in nitrogen fixation. Other nitrogenase complexes utilize a molybdenum-iron protein or a vanadium-iron protein. In Azotobacter vinelandii, this protein is Nitrogenase iron-iron protein beta chain (anfK).